The following is a 160-amino-acid chain: Transcription elongation factor GreA (160 aa).

This sequence belongs to the GreA/GreB family.

Functionally, necessary for efficient RNA polymerase transcription elongation past template-encoded arresting sites. The arresting sites in DNA have the property of trapping a certain fraction of elongating RNA polymerases that pass through, resulting in locked ternary complexes. Cleavage of the nascent transcript by cleavage factors such as GreA or GreB allows the resumption of elongation from the new 3'terminus. GreA releases sequences of 2 to 3 nucleotides. The sequence is that of Transcription elongation factor GreA from Leuconostoc citreum (strain KM20).